The following is a 657-amino-acid chain: uncharacterized protein (657 aa).

The N-terminal stretch at M1–S26 is a signal peptide. Residue C27 is the site of N-palmitoyl cysteine attachment. Residue C27 is the site of S-diacylglycerol cysteine attachment. Disordered stretches follow at residues I291 to T316, R468 to I496, and K516 to N563. Polar residues predominate over residues K294–S304. Basic and acidic residues predominate over residues L469 to I495. Polar residues predominate over residues K516–T525. Basic and acidic residues predominate over residues E526–G545. Residues K546–G559 show a composition bias toward low complexity.

It to T.pallidum TmpC.

The protein localises to the cell membrane. This is an uncharacterized protein from Mycoplasma pneumoniae (strain ATCC 29342 / M129 / Subtype 1) (Mycoplasmoides pneumoniae).